We begin with the raw amino-acid sequence, 158 residues long: SsrA-binding protein (158 aa).

The segment covering 133–147 has biased composition (basic and acidic residues); the sequence is KRQALRERQDNREAQ. The tract at residues 133-158 is disordered; the sequence is KRQALRERQDNREAQRAMASRKHLGE.

This sequence belongs to the SmpB family.

It is found in the cytoplasm. Functionally, required for rescue of stalled ribosomes mediated by trans-translation. Binds to transfer-messenger RNA (tmRNA), required for stable association of tmRNA with ribosomes. tmRNA and SmpB together mimic tRNA shape, replacing the anticodon stem-loop with SmpB. tmRNA is encoded by the ssrA gene; the 2 termini fold to resemble tRNA(Ala) and it encodes a 'tag peptide', a short internal open reading frame. During trans-translation Ala-aminoacylated tmRNA acts like a tRNA, entering the A-site of stalled ribosomes, displacing the stalled mRNA. The ribosome then switches to translate the ORF on the tmRNA; the nascent peptide is terminated with the 'tag peptide' encoded by the tmRNA and targeted for degradation. The ribosome is freed to recommence translation, which seems to be the essential function of trans-translation. This Leifsonia xyli subsp. xyli (strain CTCB07) protein is SsrA-binding protein.